Consider the following 932-residue polypeptide: Isoleucine--tRNA ligase (932 aa).

The 'HIGH' region motif lies at 57 to 67 (PYANGDIHIGT). Glutamate 559 contributes to the L-isoleucyl-5'-AMP binding site. Residues 600-604 (KMSKS) carry the 'KMSKS' region motif. An ATP-binding site is contributed by lysine 603. Cysteine 899, cysteine 902, cysteine 919, and cysteine 922 together coordinate Zn(2+).

This sequence belongs to the class-I aminoacyl-tRNA synthetase family. IleS type 1 subfamily. Monomer. Requires Zn(2+) as cofactor.

Its subcellular location is the cytoplasm. The catalysed reaction is tRNA(Ile) + L-isoleucine + ATP = L-isoleucyl-tRNA(Ile) + AMP + diphosphate. Catalyzes the attachment of isoleucine to tRNA(Ile). As IleRS can inadvertently accommodate and process structurally similar amino acids such as valine, to avoid such errors it has two additional distinct tRNA(Ile)-dependent editing activities. One activity is designated as 'pretransfer' editing and involves the hydrolysis of activated Val-AMP. The other activity is designated 'posttransfer' editing and involves deacylation of mischarged Val-tRNA(Ile). This chain is Isoleucine--tRNA ligase, found in Thermoanaerobacter pseudethanolicus (strain ATCC 33223 / 39E) (Clostridium thermohydrosulfuricum).